Consider the following 159-residue polypeptide: Probable histone H2A.5 (159 aa).

The segment covering 1-10 (MDAAGAGAGG) has biased composition (gly residues). Disordered stretches follow at residues 1 to 29 (MDAAGAGAGGKLKKGAAGRKAGGPRKKAV) and 136 to 159 (EKAAAAGKEAKSPKKAAGKSPKKA). 2 stretches are compositionally biased toward basic residues: residues 11-29 (KLKKGAAGRKAGGPRKKAV) and 148-159 (PKKAAGKSPKKA). Short sequence motifs (SPKK motif) lie at residues 147–150 (SPKK) and 155–158 (SPKK).

Belongs to the histone H2A family. In terms of assembly, the nucleosome is a histone octamer containing two molecules each of H2A, H2B, H3 and H4 assembled in one H3-H4 heterotetramer and two H2A-H2B heterodimers. The octamer wraps approximately 147 bp of DNA.

It is found in the nucleus. It localises to the chromosome. Its function is as follows. Core component of nucleosome. Nucleosomes wrap and compact DNA into chromatin, limiting DNA accessibility to the cellular machineries which require DNA as a template. Histones thereby play a central role in transcription regulation, DNA repair, DNA replication and chromosomal stability. DNA accessibility is regulated via a complex set of post-translational modifications of histones, also called histone code, and nucleosome remodeling. The protein is Probable histone H2A.5 of Oryza sativa subsp. indica (Rice).